Consider the following 120-residue polypeptide: Reprimo-like protein (120 aa).

A helical transmembrane segment spans residues 67–87 (VAQIAVLCVLSLTVVFGVFFL). Residue S109 is modified to Phosphoserine.

It belongs to the reprimo family.

The protein localises to the membrane. The protein is Reprimo-like protein (RPRML) of Homo sapiens (Human).